Consider the following 286-residue polypeptide: Puff II/9-1 protein (286 aa).

Residues 1-19 (MKQFIVLTVVLLAIQELQG) form the signal peptide. The interval 61–235 (ITAIKKDNDF…ENALNTLRCE (175 aa)) is helical. Asn-156 carries N-linked (GlcNAc...) asparagine glycosylation.

The protein is Puff II/9-1 protein (II/9-1) of Bradysia coprophila (Dark-winged fungus gnat).